The chain runs to 529 residues: tRNA-2-methylthio-N(6)-dimethylallyladenosine synthase (529 aa).

Positions 18–134 constitute an MTTase N-terminal domain; it reads RTYQVRTYGC…LPTLLERARH (117 aa). 6 residues coordinate [4Fe-4S] cluster: cysteine 27, cysteine 63, cysteine 97, cysteine 171, cysteine 175, and cysteine 178. The Radical SAM core domain occupies 157-404; the sequence is RESAYAGWVS…IELQERISLE (248 aa). The TRAM domain occupies 407-486; it reads QAQVGRTLEL…PHHLIADGAL (80 aa).

This sequence belongs to the methylthiotransferase family. MiaB subfamily. Monomer. The cofactor is [4Fe-4S] cluster.

Its subcellular location is the cytoplasm. The catalysed reaction is N(6)-dimethylallyladenosine(37) in tRNA + (sulfur carrier)-SH + AH2 + 2 S-adenosyl-L-methionine = 2-methylsulfanyl-N(6)-dimethylallyladenosine(37) in tRNA + (sulfur carrier)-H + 5'-deoxyadenosine + L-methionine + A + S-adenosyl-L-homocysteine + 2 H(+). Its function is as follows. Catalyzes the methylthiolation of N6-(dimethylallyl)adenosine (i(6)A), leading to the formation of 2-methylthio-N6-(dimethylallyl)adenosine (ms(2)i(6)A) at position 37 in tRNAs that read codons beginning with uridine. The polypeptide is tRNA-2-methylthio-N(6)-dimethylallyladenosine synthase (Mycobacterium sp. (strain KMS)).